Reading from the N-terminus, the 61-residue chain is Small ribosomal subunit protein uS14B (61 aa).

Residues Cys24, Cys27, Cys40, and Cys43 each contribute to the Zn(2+) site.

It belongs to the universal ribosomal protein uS14 family. Zinc-binding uS14 subfamily. Part of the 30S ribosomal subunit. Contacts proteins S3 and S10. Zn(2+) serves as cofactor.

Functionally, binds 16S rRNA, required for the assembly of 30S particles and may also be responsible for determining the conformation of the 16S rRNA at the A site. The chain is Small ribosomal subunit protein uS14B from Streptomyces avermitilis (strain ATCC 31267 / DSM 46492 / JCM 5070 / NBRC 14893 / NCIMB 12804 / NRRL 8165 / MA-4680).